The primary structure comprises 323 residues: MGNSAARSDFEWVYSDQPHTQRRKEMLAKYPAIKALMRPDPHIKWTVSGMVLVQVLACWLVRGLSWRWLLFWAYAFGGCINHSLTLAIHDISHNTAFGTSCVSRNRWFAIFANLPIGLPYATSFKKYHVDHHRYLGGDGLDVDIPTNFEGWFFCTPARKLLWLVLQPFFYSLRPLCVNPKVVTRMEILNALVQLAFDVTIFALWGIKPIVYLLGSSLLGLGLHPISGHFVAEHYMFLKGHETYSYYGPLNWITFNVGYHMEHHDFPSIPGYYLPLVRKIAPEYYDHLPQHHSWVKVLWDFVFEDSMGPYSRVKRKCKLAKDHL.

The N-myristoyl glycine moiety is linked to residue G2. 2 helical membrane passes run 41–61 (PHIKWTVSGMVLVQVLACWLV) and 68–88 (WLLFWAYAFGGCINHSLTLAI). The Histidine box-1 signature appears at 89-93 (HDISH). The required for C4-hydroxylase activity stretch occupies residues 95–99 (TAFGT). The Histidine box-2 motif lies at 128–132 (HVDHH). Residues 210 to 231 (VYLLGSSLLGLGLHPISGHFVA) traverse the membrane as a helical segment. A Histidine box-3 motif is present at residues 259–263 (HMEHH).

It belongs to the fatty acid desaturase type 1 family. DEGS subfamily. As to expression, highly expressed in intestinal crypt cells and adjacent epithelial cells (at protein level).

Its subcellular location is the endoplasmic reticulum membrane. The enzyme catalyses a dihydroceramide + 2 Fe(II)-[cytochrome b5] + O2 + 2 H(+) = a phytoceramide + 2 Fe(III)-[cytochrome b5] + H2O. It carries out the reaction an N-acylsphinganine + 2 Fe(II)-[cytochrome b5] + O2 + 2 H(+) = an N-acylsphing-4-enine + 2 Fe(III)-[cytochrome b5] + 2 H2O. The catalysed reaction is an N-acylsphinganine + 2 Fe(II)-[cytochrome b5] + O2 + 2 H(+) = an N-acyl-(4R)-4-hydroxysphinganine + 2 Fe(III)-[cytochrome b5] + H2O. It catalyses the reaction N-octanoylsphinganine + 2 Fe(II)-[cytochrome b5] + O2 + 2 H(+) = N-octanoyl-4-hydroxysphinganine + 2 Fe(III)-[cytochrome b5] + H2O. Its pathway is membrane lipid metabolism; sphingolipid biosynthesis. Functionally, bifunctional enzyme which acts both as a sphingolipid delta(4)-desaturase and a sphingolipid C4-monooxygenase. This Mus musculus (Mouse) protein is Sphingolipid delta(4)-desaturase/C4-monooxygenase DES2.